The sequence spans 94 residues: Co-chaperonin GroES (94 aa).

This sequence belongs to the GroES chaperonin family. As to quaternary structure, heptamer of 7 subunits arranged in a ring. Interacts with the chaperonin GroEL.

It localises to the cytoplasm. Together with the chaperonin GroEL, plays an essential role in assisting protein folding. The GroEL-GroES system forms a nano-cage that allows encapsulation of the non-native substrate proteins and provides a physical environment optimized to promote and accelerate protein folding. GroES binds to the apical surface of the GroEL ring, thereby capping the opening of the GroEL channel. In Bacillus pumilus (strain SAFR-032), this protein is Co-chaperonin GroES.